The chain runs to 430 residues: Probable WRKY transcription factor 14 (430 aa).

The WRKY DNA-binding region spans 211 to 277; that stretch reads SGEVVPSDLW…YTSEHNHPWP (67 aa). The segment at 283-366 is disordered; sequence LAGSTRSSTS…APYRPELHDH (84 aa). Residues 286-306 are compositionally biased toward low complexity; the sequence is STRSSTSSSSNPNPSKPSTAN. Residues 307–319 are compositionally biased toward polar residues; that stretch reads VNSSSIGSQNTIY. The span at 340–354 shows a compositional bias: acidic residues; sequence GDDMELENVDDDDDN.

Belongs to the WRKY group II-e family.

The protein resides in the nucleus. Its function is as follows. Transcription factor. Interacts specifically with the W box (5'-(T)TGAC[CT]-3'), a frequently occurring elicitor-responsive cis-acting element. The chain is Probable WRKY transcription factor 14 (WRKY14) from Arabidopsis thaliana (Mouse-ear cress).